The primary structure comprises 1023 residues: Cell division cycle-associated protein 2 (1023 aa).

Basic and acidic residues predominate over residues 1–14; the sequence is MDANSKDKPPETKE. Residues 1-21 are disordered; that stretch reads MDANSKDKPPETKESAMNNAG. Residues S98, S120, S126, S131, S210, S291, and S309 each carry the phosphoserine modification. T312 bears the Phosphothreonine mark. The region spanning 389–449 is the PP1-binding domain; it reads KRKRVTFGED…PEPLPQPDFD (61 aa). Phosphoserine occurs at positions 400 and 407. Residue T412 is modified to Phosphothreonine. Residue S437 is modified to Phosphoserine. The tract at residues 542-580 is disordered; that stretch reads SQETKCTKRALPKKSQVLKSCRKKKGKGKKSVQKSLYGE. The segment covering 561-573 has biased composition (basic residues); the sequence is SCRKKKGKGKKSV. Residues S591 and S614 each carry the phosphoserine modification. A disordered region spans residues 667-729; that stretch reads SSLGNATSDE…ERVASDSPKP (63 aa). Low complexity predominate over residues 679 to 691; that stretch reads NTNIMNINENKNI. Over residues 696–706 the composition is skewed to basic and acidic residues; the sequence is NKSESENEPKA. Phosphoserine is present on residues S710 and S756. Residue K762 forms a Glycyl lysine isopeptide (Lys-Gly) (interchain with G-Cter in SUMO2) linkage. Basic and acidic residues predominate over residues 803-816; the sequence is ESKSQSEDLGRKPM. 2 disordered regions span residues 803-860 and 936-1023; these read ESKS…GSSV and SPIK…ERKQ. Phosphoserine occurs at positions 936 and 977. Polar residues-rich tracts occupy residues 979-992 and 1000-1010; these read CIST…TSQF and SLNGKGESSLT. S1000 bears the Phosphoserine mark. The span at 1013–1023 shows a compositional bias: basic and acidic residues; that stretch reads ERIEHNGERKQ.

Interacts with PPP1CC. In terms of processing, phosphorylated by CDK1. May regulate its subcellular location. As to expression, ubiquitously expressed.

It localises to the nucleus. Its function is as follows. Regulator of chromosome structure during mitosis required for condensin-depleted chromosomes to retain their compact architecture through anaphase. Acts by mediating the recruitment of phopsphatase PP1-gamma subunit (PPP1CC) to chromatin at anaphase and into the following interphase. At anaphase onset, its association with chromatin targets a pool of PPP1CC to dephosphorylate substrates. This is Cell division cycle-associated protein 2 (CDCA2) from Homo sapiens (Human).